A 278-amino-acid polypeptide reads, in one-letter code: MADS-box transcription factor PHERES 2 (278 aa).

Residues 1 to 60 enclose the MADS-box domain; it reads MKRKMKLSLIENSVSRKTTFTKRKKGMTKKLTELVTLCGVEACAVVYSPFNSIPEAWPSR.

As to quaternary structure, interacts with AGL61/DIANA and AGL62. In terms of tissue distribution, male gametophyte, embryo and endosperm.

The protein resides in the nucleus. In terms of biological role, probable transcription factor involved in the development of gametophytes and seeds. In Arabidopsis thaliana (Mouse-ear cress), this protein is MADS-box transcription factor PHERES 2 (PHE2).